We begin with the raw amino-acid sequence, 499 residues long: Probable malate:quinone oxidoreductase (499 aa).

This sequence belongs to the MQO family. It depends on FAD as a cofactor.

The catalysed reaction is (S)-malate + a quinone = a quinol + oxaloacetate. The protein operates within carbohydrate metabolism; tricarboxylic acid cycle; oxaloacetate from (S)-malate (quinone route): step 1/1. The chain is Probable malate:quinone oxidoreductase from Exiguobacterium sp. (strain ATCC BAA-1283 / AT1b).